The primary structure comprises 317 residues: Beta-ketoacyl-[acyl-carrier-protein] synthase III (317 aa).

Residues cysteine 112 and histidine 244 contribute to the active site. The interval 245-249 (QANIR) is ACP-binding. Asparagine 274 is an active-site residue.

The protein belongs to the thiolase-like superfamily. FabH family. As to quaternary structure, homodimer.

The protein resides in the cytoplasm. The enzyme catalyses malonyl-[ACP] + acetyl-CoA + H(+) = 3-oxobutanoyl-[ACP] + CO2 + CoA. Its pathway is lipid metabolism; fatty acid biosynthesis. Catalyzes the condensation reaction of fatty acid synthesis by the addition to an acyl acceptor of two carbons from malonyl-ACP. Catalyzes the first condensation reaction which initiates fatty acid synthesis and may therefore play a role in governing the total rate of fatty acid production. Possesses both acetoacetyl-ACP synthase and acetyl transacylase activities. Its substrate specificity determines the biosynthesis of branched-chain and/or straight-chain of fatty acids. The protein is Beta-ketoacyl-[acyl-carrier-protein] synthase III of Rickettsia akari (strain Hartford).